We begin with the raw amino-acid sequence, 332 residues long: Cysteine and histidine-rich domain-containing protein 1 (332 aa).

Alanine 2 carries the N-acetylalanine modification. The interaction with PPP5C stretch occupies residues 2–77 (ALLCYNRGCG…KPPEPVKPEV (76 aa)). Residues cysteine 5, cysteine 10, cysteine 24, histidine 27, cysteine 42, and cysteine 43 each contribute to the Zn(2+) site. CHORD domains are found at residues 5–64 (CYNR…KGRH) and 157–216 (CKNG…KGKH). Threonine 47 is modified (phosphothreonine). Serine 51 bears the Phosphoserine mark. Cysteine 59, histidine 64, cysteine 157, cysteine 162, cysteine 176, histidine 179, cysteine 194, cysteine 195, cysteine 211, and histidine 216 together coordinate Zn(2+). Positions 65 to 316 (NSEKPPEPVK…AEPMQWASLE (252 aa)) are interaction with HSP90AA1 and HSP90AB1. Positions 227 to 316 (VVPCRHDWHQ…AEPMQWASLE (90 aa)) constitute a CS domain.

In terms of assembly, interacts with HSP90AA1, ROCK1 and ROCK2. Interacts with HSP90AB1 and PPP5C. In terms of tissue distribution, underexpressed in many breast and lung cancers.

Regulates centrosome duplication, probably by inhibiting the kinase activity of ROCK2. Proposed to act as co-chaperone for HSP90. May play a role in the regulation of NOD1 via a HSP90 chaperone complex. In vitro, has intrinsic chaperone activity. This function may be achieved by inhibiting association of ROCK2 with NPM1. Plays a role in ensuring the localization of the tyrosine kinase receptor EGFR to the plasma membrane, and thus ensures the subsequent regulation of EGFR activity and EGF-induced actin cytoskeleton remodeling. Involved in stress response. Prevents tumorigenesis. The polypeptide is Cysteine and histidine-rich domain-containing protein 1 (CHORDC1) (Homo sapiens (Human)).